The primary structure comprises 541 residues: Putative transferase YhbX (541 aa).

Over 1 to 60 the chain is Periplasmic; the sequence is MTVFNKFARSFKSHWLLYLSVIVFGITNLVASSGAHMVQRLLFFVLTILVVKRISSLPLR. A helical membrane pass occupies residues 61 to 81; sequence LLVAAPFVLLTAADMSISLYS. Over 82–110 the chain is Cytoplasmic; it reads WCTFGTTFNDGFAISVLQSDPDEVAKMLG. The helical transmembrane segment at 111–131 threads the bilayer; that stretch reads MYSPYLCAFAFLSLLFLAVII. Topologically, residues 132–141 are periplasmic; the sequence is KYDVSLPTKK. A helical transmembrane segment spans residues 142–162; that stretch reads VTGILLLIVISGSLFSACQFA. Over 163–264 the chain is Cytoplasmic; the sequence is YKDAKNKNAF…RKQIKLFNQA (102 aa). Residues 265–285 traverse the membrane as a helical segment; the sequence is ISGAPYTALSVPLSLTADSVL. The Periplasmic segment spans residues 286 to 541; the sequence is SHDIHNYPDN…QGNPTPEGQG (256 aa).

This sequence belongs to the phosphoethanolamine transferase family.

It localises to the cell inner membrane. In terms of biological role, there are several lipid A forms in this strain, including a phosphoethanolamine (1-O-P-pEtN) form; overexpression of this gene does not lead to higher levels of the 1-O-P-pEtN form of lipid A. The chain is Putative transferase YhbX (yhbX) from Escherichia coli O157:H7.